The following is a 385-amino-acid chain: AA13 family lytic polysaccharide monooxygenase aasA (385 aa).

Positions 1–18 (MKSLLALVAGNLVTAVSG) are cleaved as a signal peptide. His19 is a Cu(2+) binding site. His19 carries the methylhistidine modification. Positions 19–248 (HGYLTVPASR…AQVYLHCADI (230 aa)) are N-terminal catalytic module. 7 disulfide bridges follow: Cys40–Cys43, Cys66–Cys245, Cys102–Cys203, Cys118–Cys145, Cys153–Cys161, Cys167–Cys173, and Cys181–Cys192. Position 109 (His109) interacts with Cu(2+). Residue Asn120 is glycosylated (N-linked (GlcNAc...) asparagine). Tyr242 is a binding site for Cu(2+). A disordered region spans residues 254–276 (SGSSPSPTSTTSTATSTTTPSST). Low complexity predominate over residues 256 to 276 (SSPSPTSTTSTATSTTTPSST). The region spanning 278 to 385 (CASAISIPVT…TTATESGAWR (108 aa)) is the CBM20 domain. Asn364 carries an N-linked (GlcNAc...) asparagine glycan.

Belongs to the polysaccharide monooxygenase AA13 family. Cu(2+) is required as a cofactor. Post-translationally, the catalytically essential N-terminal histidine His-19 is post-translationally modified by methylation to prevent protonation of the histidine side chain, and protect the critical active site of the enzyme from oxidative damage.

It is found in the secreted. The catalysed reaction is starch + reduced acceptor + O2 = D-glucono-1,5-lactone-terminated malto-oligosaccharides + short-chain malto-oligosaccharides + acceptor + H2O.. Its function is as follows. Starch-active polysaccharide monooxygenase that oxidizes the C1 position of starch substrates, but not in cellulose, chitin, polygalacturonan or esterified pectin, nor with Arabidopsis stem cell walls. Catalysis by LPMOs requires the reduction of the active-site copper from Cu(II) to Cu(I) by a reducing agent and H(2)O(2) or O(2) as a cosubstrate. This Emericella nidulans (strain FGSC A4 / ATCC 38163 / CBS 112.46 / NRRL 194 / M139) (Aspergillus nidulans) protein is AA13 family lytic polysaccharide monooxygenase aasA.